Reading from the N-terminus, the 218-residue chain is Small ribosomal subunit protein mS34 (218 aa).

The tract at residues 178–218 (RQKNGDPSTEEPMLSLERIRTDPWDYPENQEAKKKTKGTAV) is disordered.

It belongs to the mitochondrion-specific ribosomal protein mS34 family. As to quaternary structure, component of the mitochondrial ribosome small subunit (28S) which comprises a 12S rRNA and about 30 distinct proteins.

It localises to the mitochondrion. Required for mitochondrial translation, plays a role in maintaining the stability of the small ribosomal subunit and the 12S rRNA that are required for mitoribosome formation. The protein is Small ribosomal subunit protein mS34 of Bos taurus (Bovine).